Reading from the N-terminus, the 433-residue chain is MAKIVKVIGREIIDSRGNPTVEAEVHLEGGFVGLAAAPSGASTGSREALELRDGDKARFLGKGVLKAVAAVNNEIAQALVGKDATNQAEIDQIMIDLDGTENKSKFGANAILAVSLANAKAAAAAKGMPLFAWIAELNGTPGQYSMPLPMMNIINGGEHADNNVDIQEFMIQPVGAKTLKEALRIGAEVFHNLAKVLKGKGLSTAVGDEGGFAPNLESNAAALACIKEAVEKAGYVLGKDVTLAMDCASSEFYNKENGMYEMKGEGKSFTSQEFTHYLEELCKEYPIVSIEDGQDESDWEGFAYQTKVLGDKVQLVGDDLFVTNTKILKEGIEKGIANSILIKFNQIGSLTETLAAIKMAKDAGYTAVISHRSGETEDATIADLAVGTAAGQIKTGSMSRSDRIAKYNQLIRIEEALGDKAPFLGLKAVKGQA.

Gln-167 lines the (2R)-2-phosphoglycerate pocket. Glu-209 serves as the catalytic Proton donor. Residues Asp-246, Glu-291, and Asp-318 each contribute to the Mg(2+) site. Lys-343, Arg-372, Ser-373, and Lys-394 together coordinate (2R)-2-phosphoglycerate. Residue Lys-343 is the Proton acceptor of the active site.

This sequence belongs to the enolase family. In terms of assembly, component of the RNA degradosome, a multiprotein complex involved in RNA processing and mRNA degradation. Mg(2+) is required as a cofactor.

The protein resides in the cytoplasm. It is found in the secreted. The protein localises to the cell surface. It catalyses the reaction (2R)-2-phosphoglycerate = phosphoenolpyruvate + H2O. It functions in the pathway carbohydrate degradation; glycolysis; pyruvate from D-glyceraldehyde 3-phosphate: step 4/5. In terms of biological role, catalyzes the reversible conversion of 2-phosphoglycerate (2-PG) into phosphoenolpyruvate (PEP). It is essential for the degradation of carbohydrates via glycolysis. The chain is Enolase from Pasteurella multocida (strain Pm70).